The following is a 316-amino-acid chain: HPr kinase/phosphorylase (316 aa).

Residues His-143 and Lys-164 contribute to the active site. ATP is bound at residue 158–165 (GEAGSGKS). Ser-165 provides a ligand contact to Mg(2+). The active-site Proton acceptor; for phosphorylation activity. Proton donor; for dephosphorylation activity is Asp-182. The tract at residues 206 to 215 (LEVRGLGVLN) is important for the catalytic mechanism of both phosphorylation and dephosphorylation. Glu-207 serves as a coordination point for Mg(2+). Residue Arg-251 is part of the active site. The interval 272-277 (PVMPGR) is important for the catalytic mechanism of dephosphorylation.

The protein belongs to the HPrK/P family. As to quaternary structure, homohexamer. The cofactor is Mg(2+).

The catalysed reaction is [HPr protein]-L-serine + ATP = [HPr protein]-O-phospho-L-serine + ADP + H(+). It carries out the reaction [HPr protein]-O-phospho-L-serine + phosphate + H(+) = [HPr protein]-L-serine + diphosphate. Functionally, catalyzes the ATP- as well as the pyrophosphate-dependent phosphorylation of a specific serine residue in HPr, a phosphocarrier protein of the phosphoenolpyruvate-dependent sugar phosphotransferase system (PTS). HprK/P also catalyzes the pyrophosphate-producing, inorganic phosphate-dependent dephosphorylation (phosphorolysis) of seryl-phosphorylated HPr (P-Ser-HPr). The protein is HPr kinase/phosphorylase of Xanthomonas axonopodis pv. citri (strain 306).